We begin with the raw amino-acid sequence, 384 residues long: MGWSPRWKVMLRGIFNAMISIHILLSLLFAHIATAQSGRSFGDSHGHSLNKRAPLAPDGDGICYTYTIQEGDTCAKLAQRYQVTTSNIETWNVGSWGWPGCAKIKQGDFVCLSSGALPMPVALPNAVCGPQVPGTRRPIKYSDLASLNPCPSTQCCAISGQCGTLSNFCDVSPLGSCIFNCGPKSTTKSAASKTTTTSNPTTTSKTTITSKPTTTSKPTTISKTTKAVMVTLTSIQMVPPPDKTTASVAPTATWQITIYEKGGCKGDYYSAQGHEDQIVGGCIVLADNTDTKISDTTTSCRWWSDGGLNWGTCASSKLVNARSFFIKSGKCVIYSGKKCQNEDWVGETYGAFKGCQDGNTGYLSPRKDAKWGSLQCFEYKSYTT.

Residues 1–35 (MGWSPRWKVMLRGIFNAMISIHILLSLLFAHIATA) form the signal peptide. The LysM domain occupies 64–112 (YTYTIQEGDTCAKLAQRYQVTTSNIETWNVGSWGWPGCAKIKQGDFVCL). The segment at 185 to 220 (STTKSAASKTTTTSNPTTTSKTTITSKPTTTSKPTT) is disordered.

This sequence belongs to the secreted LysM effector family.

It is found in the secreted. Its function is as follows. Secreted LysM effector that might have a role in sequestration of chitin oligosaccharides (breakdown products of fungal cell walls that are released during invasion and act as triggers of host immunity) to dampen host defense. The chain is Secreted LysM effector LysM14 from Penicillium expansum (Blue mold rot fungus).